We begin with the raw amino-acid sequence, 296 residues long: Diaminopimelate epimerase (296 aa).

3 residues coordinate substrate: Asn17, Gln49, and Asn69. The active-site Proton donor is the Cys78. Residues 79-80 (GN), Asn171, Asn205, and 223-224 (ER) contribute to the substrate site. Cys232 serves as the catalytic Proton acceptor. 233–234 (GT) contacts substrate.

Belongs to the diaminopimelate epimerase family. In terms of assembly, homodimer.

It is found in the cytoplasm. It catalyses the reaction (2S,6S)-2,6-diaminopimelate = meso-2,6-diaminopimelate. It functions in the pathway amino-acid biosynthesis; L-lysine biosynthesis via DAP pathway; DL-2,6-diaminopimelate from LL-2,6-diaminopimelate: step 1/1. Functionally, catalyzes the stereoinversion of LL-2,6-diaminopimelate (L,L-DAP) to meso-diaminopimelate (meso-DAP), a precursor of L-lysine and an essential component of the bacterial peptidoglycan. The protein is Diaminopimelate epimerase of Methylorubrum populi (strain ATCC BAA-705 / NCIMB 13946 / BJ001) (Methylobacterium populi).